A 234-amino-acid polypeptide reads, in one-letter code: MLTRKQFELLKFINERLKEAGVPPSFDEMKDALDLRSKSGIHRLITALEERGFIRRLPNRARAIEVIKLPDLGGNSGARRGFTPSVIEGNLGKVRPPSPQHAEDDSDRNVAVPVMGRIAAGTPIEALQTRSHTISVPPDMLGSGEHYALEVRGDSMMDAGILDGDMALIQRNESADTGDIVVALIDEEEATLKRFRRRGASIALEPANSAYEVRILPPNRVRIQGKLIGLYRKY.

The H-T-H motif DNA-binding region spans 26-46 (FDEMKDALDLRSKSGIHRLIT). The tract at residues 80 to 107 (RGFTPSVIEGNLGKVRPPSPQHAEDDSD) is disordered. Active-site for autocatalytic cleavage activity residues include S155 and K193.

The protein belongs to the peptidase S24 family. In terms of assembly, homodimer.

It catalyses the reaction Hydrolysis of Ala-|-Gly bond in repressor LexA.. In terms of biological role, represses a number of genes involved in the response to DNA damage (SOS response), including recA and lexA. In the presence of single-stranded DNA, RecA interacts with LexA causing an autocatalytic cleavage which disrupts the DNA-binding part of LexA, leading to derepression of the SOS regulon and eventually DNA repair. The protein is LexA repressor of Rhodopseudomonas palustris (strain HaA2).